Here is an 867-residue protein sequence, read N- to C-terminus: Nuclear cap-binding protein subunit 1 (867 aa).

The region spanning 9–228 is the MIF4G domain; it reads LLRIGDRCPE…DLWERIQVLS (220 aa). A disordered region spans residues 752 to 797; that stretch reads SADGDVPNLRAGDPNVNSSARDPEATTMEIDNENGGDNDSQLNGQN. Positions 788-797 are enriched in polar residues; the sequence is DNDSQLNGQN.

It belongs to the NCBP1 family. As to quaternary structure, component of the nuclear cap-binding complex (CBC), a heterodimer composed of ABH1/CBP80 and CBP20 that interacts with m7GpppG-capped RNA.

Its subcellular location is the nucleus. It localises to the cytoplasm. Component of the cap-binding complex (CBC), which binds cotranscriptionally to the 5'-cap of pre-mRNAs and is involved in various processes such as pre-mRNA splicing and RNA-mediated gene silencing (RNAi) by microRNAs (miRNAs). The CBC complex is involved in miRNA-mediated RNA interference and is required for primary miRNA processing. In the CBC complex, ABH1/CBP80 does not bind directly capped RNAs (m7GpppG-capped RNA) but is required to stabilize the movement of the N-terminal loop of CBP20 and lock the CBC into a high affinity cap-binding state with the cap structure. This is Nuclear cap-binding protein subunit 1 (ABH1) from Oryza sativa subsp. japonica (Rice).